A 558-amino-acid polypeptide reads, in one-letter code: Two-component response regulator-like APRR5 (558 aa).

Residues 51–169 (RVLLVEADDS…ELRNLWQHVW (119 aa)) form the Response regulatory domain. The interval 180–233 (FPWNESVGQQKAEGASANNSNGKRDDHVVSGNGGDAQSSCTRPEMEGESADVEV) is disordered. A coiled-coil region spans residues 240 to 260 (QMECAKSQFNETRLLANELQS). Disordered regions lie at residues 297–319 (SLRR…HPSS) and 535–558 (KKLA…TQAP). Positions 303–319 (ASENQSSGDRPSLHPSS) are enriched in polar residues. A CCT domain is found at 509–551 (REAALTKFRMKRKDRCYEKKVRYESRKKLAEQRPRIKGQFVRQ).

The protein belongs to the ARR-like family. As to quaternary structure, interacts with ADO1 and ADO2. Interacts with SPY (via N-terminus). In terms of processing, phosphorylation varies throughout the diurnal cycle and enhances ADO1 binding. Post-translationally, O-fucosylated by SPY. O-fucosylation promotes APRR5 proteolysis.

The protein resides in the nucleus. Its function is as follows. Transcriptional repressor of CCA1 and LHY, thereby controlling photoperiodic flowering response. Involved in the positive and negative feedback loops of the circadian clock. With RVE8, forms a negative feedback loop of the circadian clock. Expression of several members of the ARR-like family is controlled by circadian rhythm. Proteolytic substrate of the E3 ubiquitin ligase SCF(ADO1) complex. APRR9, APRR7, and APRR5 coordinately act on the upstream region of the target genes to repress their expression from noon until midnight. The particular coordinated sequential expression of APRR9, APRR7, APRR5, APRR3 and APPR1 result to circadian waves that may be at the basis of the endogenous circadian clock. Negative regulator of shade avoidance response. Involved in the inhibition of leaf expansion in shade avoidance response. The protein is Two-component response regulator-like APRR5 (APRR5) of Arabidopsis thaliana (Mouse-ear cress).